The chain runs to 131 residues: Small ribosomal subunit protein uS8 (131 aa).

Belongs to the universal ribosomal protein uS8 family. Part of the 30S ribosomal subunit. Contacts proteins S5 and S12.

One of the primary rRNA binding proteins, it binds directly to 16S rRNA central domain where it helps coordinate assembly of the platform of the 30S subunit. This is Small ribosomal subunit protein uS8 from Paracidovorax citrulli (strain AAC00-1) (Acidovorax citrulli).